The following is a 67-amino-acid chain: Large ribosomal subunit protein bL35 (67 aa).

Belongs to the bacterial ribosomal protein bL35 family.

The sequence is that of Large ribosomal subunit protein bL35 from Sinorhizobium medicae (strain WSM419) (Ensifer medicae).